Reading from the N-terminus, the 279-residue chain is MKTKTDFFKMKQENEPIVMLTAYDFPSAKLAEAAGVDMILVGDSLGMVVLGYDSTIPVTVEDMIHHTKAVRRGAPNTFIVTDMPFMSYHLSMEEALRNAQRIMQESGANAVKVEGADDVVNVIRAFTKAGVPVVAHLGLTPQSVGVLGGYKVQGKDAESARKLIEDAKLCEEAGAIALVLECVPKQIAAEITKQLTIPTIGIGAGDEVDGQVLVYHDVLGYGVDRVPKFVKKYANIQETISHALANYIADVKLRQFPEATHMFTMKEEEWIALYGGKRT.

Positions 43 and 82 each coordinate Mg(2+). Residues 43 to 44, Asp-82, and Lys-112 contribute to the 3-methyl-2-oxobutanoate site; that span reads DS. Residue Glu-114 participates in Mg(2+) binding. Glu-181 acts as the Proton acceptor in catalysis.

Belongs to the PanB family. Homodecamer; pentamer of dimers. The cofactor is Mg(2+).

It localises to the cytoplasm. It catalyses the reaction 3-methyl-2-oxobutanoate + (6R)-5,10-methylene-5,6,7,8-tetrahydrofolate + H2O = 2-dehydropantoate + (6S)-5,6,7,8-tetrahydrofolate. It participates in cofactor biosynthesis; (R)-pantothenate biosynthesis; (R)-pantoate from 3-methyl-2-oxobutanoate: step 1/2. Catalyzes the reversible reaction in which hydroxymethyl group from 5,10-methylenetetrahydrofolate is transferred onto alpha-ketoisovalerate to form ketopantoate. In Geobacillus sp. (strain WCH70), this protein is 3-methyl-2-oxobutanoate hydroxymethyltransferase.